Here is an 869-residue protein sequence, read N- to C-terminus: Serendipity locus protein H-1 (869 aa).

Residues 1-17 (MEGGKGEGKRMKEEAPS) are compositionally biased toward basic and acidic residues. Disordered stretches follow at residues 1-32 (MEGG…AGTP) and 134-165 (FSVT…TPVK). Positions 146-164 (AFTNSPFKKTSSSGTSTPV) are enriched in polar residues. 8 consecutive C2H2-type zinc fingers follow at residues 269 to 293 (HKCL…AAAH), 299 to 321 (YRCS…LKTH), 331 to 352 (KKCP…RKIH), 358 to 380 (YQCD…ARIH), 386 to 408 (YECP…QKYH), 414 to 436 (YRCE…NLVH), 442 to 464 (FACT…SNIH), and 470 to 493 (FKCN…RRRH). Disordered regions lie at residues 554–573 (TSTA…QPQQ) and 617–652 (PKQT…SSLE). Positions 630–648 (APKQLQQKPQLLQQGQPQQ) are enriched in low complexity.

Distribution varies between nurse cells and the oocyte during oogenesis. Weakly expressed in follicle and border cells.

It is found in the nucleus. In terms of biological role, may belong to a complex set of multifingered proteins which play an important role in gene activation or regulation at early embryonic stages through a maximal accumulation of their transcripts (or protein product) in the mature oocyte. In Drosophila melanogaster (Fruit fly), this protein is Serendipity locus protein H-1 (wdn).